Reading from the N-terminus, the 233-residue chain is Small ribosomal subunit protein uS3 (233 aa).

The 69-residue stretch at 39 to 107 (VRQFLNKELE…PAQINIAEVR (69 aa)) folds into the KH type-2 domain.

It belongs to the universal ribosomal protein uS3 family. Part of the 30S ribosomal subunit. Forms a tight complex with proteins S10 and S14.

Its function is as follows. Binds the lower part of the 30S subunit head. Binds mRNA in the 70S ribosome, positioning it for translation. In Edwardsiella ictaluri (strain 93-146), this protein is Small ribosomal subunit protein uS3.